A 204-amino-acid polypeptide reads, in one-letter code: dTTP/UTP pyrophosphatase (204 aa).

Asp-68 (proton acceptor) is an active-site residue.

It belongs to the Maf family. YhdE subfamily. It depends on a divalent metal cation as a cofactor.

It is found in the cytoplasm. It catalyses the reaction dTTP + H2O = dTMP + diphosphate + H(+). It carries out the reaction UTP + H2O = UMP + diphosphate + H(+). In terms of biological role, nucleoside triphosphate pyrophosphatase that hydrolyzes dTTP and UTP. May have a dual role in cell division arrest and in preventing the incorporation of modified nucleotides into cellular nucleic acids. In Thermotoga petrophila (strain ATCC BAA-488 / DSM 13995 / JCM 10881 / RKU-1), this protein is dTTP/UTP pyrophosphatase.